Reading from the N-terminus, the 506-residue chain is MIYAAPGTPGAVVTFKPRYGNYIGGEFVPPVKGQYFTNTSPVNGQPIAEFPRSTAEDIDKALDAAHAAADAWGRTSVQERSNILLKIADRIEQNLELLAVTETWDNGKAVRETLNADIPLAADHFRYFAGCIRAQEGSAAEINDSTVAYHIHEPLGVVGQIIPWNFPLLMAAWKLAPALAAGNCVVLKPAEQTPLGICVLLELIGDLLPPGVLNVVQGFGREAGEALATSKRIAKIAFTGSTPVGSHILKCAAESIIPSTVELGGKSPNIYFEDIMQAEPAFIEKAAEGLVLAFFNQGEVCTCPSRALVQESIYPAFMEEVLKKVRAIKRGDPLDTETMVGAQASQQQYEKILSYLDIAQQEGAELLAGGSVEKLEGNLASGYYIQPTLLKGHNGMRVFQEEIFGPVVGVTTFKDEAEALAIANDTEYGLGAGLWTRDINRAYRMGRGIKAGRVWTNCYHLYPAHAAFGGYKKSGVGRETHKMMLDHYQQTKNLLVSYDIDPLGFF.

Catalysis depends on residues Glu262 and Cys301.

This sequence belongs to the aldehyde dehydrogenase family.

It carries out the reaction acetaldehyde + NAD(+) + H2O = acetate + NADH + 2 H(+). It participates in alcohol metabolism; ethanol degradation; acetate from ethanol: step 2/2. In terms of biological role, catalyzes the NAD(+)-dependent oxidation of acetaldehyde to acetate. Is likely a component of the ethanol oxidation system that allows P.aeruginosa to grow on ethanol as the sole carbon and energy source. The protein is Acetaldehyde dehydrogenase of Pseudomonas aeruginosa.